Here is an 83-residue protein sequence, read N- to C-terminus: uncharacterized protein (83 aa).

This is an uncharacterized protein from Dictyostelium discoideum (Social amoeba).